The following is a 158-amino-acid chain: MSEKKHIMTYEGVKKLEDELEYLKTVKRKEITEKIKVALGYGDLSENSEYDEAKNEQAFTEGRIIQLENMLKNAVVVDESEISTDIVTVGSIVKVMDFDFDEEVEYSIVGSAEADPMNFKISNESPVGEGLMGKKVGDVVEIEVPGGTTKFEVLGIRR.

Residues 47-74 (NSEYDEAKNEQAFTEGRIIQLENMLKNA) adopt a coiled-coil conformation.

This sequence belongs to the GreA/GreB family.

Functionally, necessary for efficient RNA polymerase transcription elongation past template-encoded arresting sites. The arresting sites in DNA have the property of trapping a certain fraction of elongating RNA polymerases that pass through, resulting in locked ternary complexes. Cleavage of the nascent transcript by cleavage factors such as GreA or GreB allows the resumption of elongation from the new 3'terminus. GreA releases sequences of 2 to 3 nucleotides. This is Transcription elongation factor GreA from Clostridium perfringens (strain ATCC 13124 / DSM 756 / JCM 1290 / NCIMB 6125 / NCTC 8237 / Type A).